We begin with the raw amino-acid sequence, 243 residues long: Protein-L-isoaspartate O-methyltransferase 2 (243 aa).

Residues 21-42 form a disordered region; it reads DACADRGHPSAERSTPETERRR. Residues 23–42 show a composition bias toward basic and acidic residues; sequence CADRGHPSAERSTPETERRR. Residue Ser94 is part of the active site.

Belongs to the methyltransferase superfamily. L-isoaspartyl/D-aspartyl protein methyltransferase family.

It localises to the cytoplasm. It carries out the reaction [protein]-L-isoaspartate + S-adenosyl-L-methionine = [protein]-L-isoaspartate alpha-methyl ester + S-adenosyl-L-homocysteine. Catalyzes the methyl esterification of L-isoaspartyl residues in peptides and proteins that result from spontaneous decomposition of normal L-aspartyl and L-asparaginyl residues. It plays a role in the repair and/or degradation of damaged proteins. The chain is Protein-L-isoaspartate O-methyltransferase 2 from Anaeromyxobacter sp. (strain Fw109-5).